A 413-amino-acid chain; its full sequence is Precorrin-6Y C(5,15)-methyltransferase [decarboxylating] (413 aa).

This sequence belongs to the precorrin methyltransferase family.

It catalyses the reaction precorrin-6B + 2 S-adenosyl-L-methionine = precorrin-8X + 2 S-adenosyl-L-homocysteine + CO2 + 3 H(+). The protein operates within cofactor biosynthesis; adenosylcobalamin biosynthesis; cob(II)yrinate a,c-diamide from precorrin-2 (aerobic route): step 7/10. Functionally, catalyzes the methylation of both C-5 and C-15 in precorrin-6Y to form precorrin-8X. This is Precorrin-6Y C(5,15)-methyltransferase [decarboxylating] (cobL) from Sinorhizobium sp.